Reading from the N-terminus, the 173-residue chain is NADH-ubiquinone oxidoreductase chain 6 (173 aa).

The next 5 helical transmembrane spans lie at 1-21, 27-47, 48-68, 87-107, and 139-159; these read MTYF…AVAS, YGVV…LSLG, VSFV…VVFV, VVGY…VGGF, and CGVG…FVVL.

This sequence belongs to the complex I subunit 6 family.

The protein localises to the mitochondrion membrane. It catalyses the reaction a ubiquinone + NADH + 5 H(+)(in) = a ubiquinol + NAD(+) + 4 H(+)(out). Core subunit of the mitochondrial membrane respiratory chain NADH dehydrogenase (Complex I) that is believed to belong to the minimal assembly required for catalysis. Complex I functions in the transfer of electrons from NADH to the respiratory chain. The immediate electron acceptor for the enzyme is believed to be ubiquinone. The sequence is that of NADH-ubiquinone oxidoreductase chain 6 (MT-ND6) from Ptychoramphus aleuticus (Cassin's auklet).